Here is a 568-residue protein sequence, read N- to C-terminus: Urease subunit alpha (568 aa).

Residues 130-568 (GGIDTHIHFI…LPMAQRYFLF (439 aa)) enclose the Urease domain. The Ni(2+) site is built by His135, His137, and Lys218. Lys218 carries the N6-carboxylysine modification. A substrate-binding site is contributed by His220. Positions 247 and 273 each coordinate Ni(2+). The active-site Proton donor is the His321. Asp361 contacts Ni(2+).

Belongs to the metallo-dependent hydrolases superfamily. Urease alpha subunit family. Heterotrimer of UreA (gamma), UreB (beta) and UreC (alpha) subunits. Three heterotrimers associate to form the active enzyme. Requires Ni cation as cofactor. Carboxylation allows a single lysine to coordinate two nickel ions.

It localises to the cytoplasm. The catalysed reaction is urea + 2 H2O + H(+) = hydrogencarbonate + 2 NH4(+). It functions in the pathway nitrogen metabolism; urea degradation; CO(2) and NH(3) from urea (urease route): step 1/1. This is Urease subunit alpha from Burkholderia pseudomallei (strain 668).